We begin with the raw amino-acid sequence, 257 residues long: NAD-capped RNA hydrolase NudC (257 aa).

Substrate is bound at residue Arg-69. Zn(2+) contacts are provided by Cys-98 and Cys-101. Glu-111 is a substrate binding site. Zn(2+) is bound by residues Cys-116 and Cys-119. Substrate is bound at residue Tyr-124. The region spanning 125–248 (PQIAPCIIVA…TVARRLIEDT (124 aa)) is the Nudix hydrolase domain. A divalent metal cation is bound by residues Ala-158, Glu-174, and Glu-178. Positions 159 to 180 (GFVEVGETLEQAVAREVMEESG) match the Nudix box motif. Substrate is bound at residue 192–199 (QPWPFPQS). A divalent metal cation is bound at residue Glu-219. Ala-241 serves as a coordination point for substrate.

This sequence belongs to the Nudix hydrolase family. NudC subfamily. In terms of assembly, homodimer. It depends on Mg(2+) as a cofactor. Mn(2+) is required as a cofactor. Requires Zn(2+) as cofactor.

It carries out the reaction a 5'-end NAD(+)-phospho-ribonucleoside in mRNA + H2O = a 5'-end phospho-adenosine-phospho-ribonucleoside in mRNA + beta-nicotinamide D-ribonucleotide + 2 H(+). The catalysed reaction is NAD(+) + H2O = beta-nicotinamide D-ribonucleotide + AMP + 2 H(+). It catalyses the reaction NADH + H2O = reduced beta-nicotinamide D-ribonucleotide + AMP + 2 H(+). MRNA decapping enzyme that specifically removes the nicotinamide adenine dinucleotide (NAD) cap from a subset of mRNAs by hydrolyzing the diphosphate linkage to produce nicotinamide mononucleotide (NMN) and 5' monophosphate mRNA. The NAD-cap is present at the 5'-end of some mRNAs and stabilizes RNA against 5'-processing. Has preference for mRNAs with a 5'-end purine. Catalyzes the hydrolysis of a broad range of dinucleotide pyrophosphates. The polypeptide is NAD-capped RNA hydrolase NudC (Salmonella agona (strain SL483)).